Reading from the N-terminus, the 515-residue chain is 13S globulin seed storage protein (515 aa).

The N-terminal stretch at 1-22 (MSTKLILSFSLCLMVLSCSAQA) is a signal peptide. Residues 23–96 (AQLWPWRKGQ…RYVIQPGGLL (74 aa)) form an igE-binding epitope region. 2 disulfides stabilise this stretch: cysteine 47/cysteine 80 and cysteine 123/cysteine 327. Residues 52–272 (LTASEPSRRV…FRDVDRETIS (221 aa)) form the Cupin type-1 1 domain. The tract at residues 97-172 (LPSYSNAPYI…REGDVIPSPA (76 aa)) is igE-binding epitope with a very strong IgE-binding activity. Disordered regions lie at residues 123 to 156 (CPETFQSDSEYPQSQRGQHSRESESQESSRGDQH), 210 to 241 (LAGQSQQGREERRSQQQTREEGGDRQSRESDD), and 295 to 320 (PEDSEEGYERQRGDRKRDERGSGRSN). 3 stretches are compositionally biased toward basic and acidic residues: residues 141-156 (HSRESESQESSRGDQH), 217-239 (GREERRSQQQTREEGGDRQSRES), and 295-316 (PEDSEEGYERQRGDRKRDERGS). IgE-binding epitope stretches follow at residues 173 to 248 (GVVQ…LIGA) and 249 to 320 (NILS…GRSN). In terms of domain architecture, Cupin type-1 2 spans 333 to 482 (QNVNRPSHAD…SYDISTEEAY (150 aa)). The segment at 347–387 (RAGRINTVNSNNLPILEFLQLSAQHVVLYKNAIIGPRWNLN) is igE-binding epitope with a strong IgE-binding activity. IgE-binding epitope stretches follow at residues 407–457 (EGKS…PIAG), 440–476 (EWVELKNNDNAITSPIAGRTSVLRAIPVEVLANSYDI), and 475–511 (DISTEEAYKLKNGRQEVEVFRPFQSRYEKEEEKERER).

This sequence belongs to the 11S seed storage protein (globulins) family. Homohexamer. In terms of processing, proteolytically processed from a single precursor to produce an acidic and a basic chain that are linked by a disulfide bond. In terms of tissue distribution, expressed in seeds (at protein level).

In terms of biological role, seed storage protein. This chain is 13S globulin seed storage protein, found in Fagopyrum tataricum (Tartarian buckwheat).